We begin with the raw amino-acid sequence, 399 residues long: Methylthioribose kinase (399 aa).

Residues N40, K57, and 111–113 (EDL) contribute to the ATP site. Residue D229 coordinates substrate. Residue 246 to 248 (DAE) coordinates ATP. R344 provides a ligand contact to substrate.

The protein belongs to the methylthioribose kinase family. As to quaternary structure, homodimer.

It catalyses the reaction 5-(methylsulfanyl)-D-ribose + ATP = 5-(methylsulfanyl)-alpha-D-ribose 1-phosphate + ADP + H(+). Its pathway is amino-acid biosynthesis; L-methionine biosynthesis via salvage pathway; S-methyl-5-thio-alpha-D-ribose 1-phosphate from S-methyl-5'-thioadenosine (hydrolase route): step 2/2. In terms of biological role, catalyzes the phosphorylation of methylthioribose into methylthioribose-1-phosphate. In Citrobacter koseri (strain ATCC BAA-895 / CDC 4225-83 / SGSC4696), this protein is Methylthioribose kinase.